A 286-amino-acid polypeptide reads, in one-letter code: Ribonuclease H1 (286 aa).

Positions 101-115 (EPLDGDGHESAEPYA) are enriched in basic and acidic residues. The interval 101-127 (EPLDGDGHESAEPYAKHMKPSVEPAPP) is disordered. In terms of domain architecture, RNase H type-1 spans 136-282 (MGDFVVVYTD…ADRLAREGAK (147 aa)). The Mg(2+) site is built by Asp-145, Glu-186, Asp-210, and Asp-274.

It belongs to the RNase H family. In terms of assembly, monomer. Mg(2+) serves as cofactor. As to expression, ubiquitous.

It localises to the cytoplasm. It carries out the reaction Endonucleolytic cleavage to 5'-phosphomonoester.. Its activity is regulated as follows. In the presence of magnesium, manganese is inhibitory. In terms of biological role, endonuclease that specifically degrades the RNA of RNA-DNA hybrids. Plays a role in RNA polymerase II (RNAp II) transcription termination by degrading R-loop RNA-DNA hybrid formation at G-rich pause sites located downstream of the poly(A) site and behind the elongating RNAp II. The protein is Ribonuclease H1 (RNASEH1) of Homo sapiens (Human).